The chain runs to 478 residues: Proline--tRNA ligase (478 aa).

The protein belongs to the class-II aminoacyl-tRNA synthetase family. ProS type 3 subfamily. As to quaternary structure, homodimer.

Its subcellular location is the cytoplasm. It catalyses the reaction tRNA(Pro) + L-proline + ATP = L-prolyl-tRNA(Pro) + AMP + diphosphate. Catalyzes the attachment of proline to tRNA(Pro) in a two-step reaction: proline is first activated by ATP to form Pro-AMP and then transferred to the acceptor end of tRNA(Pro). The chain is Proline--tRNA ligase from Methanococcoides burtonii (strain DSM 6242 / NBRC 107633 / OCM 468 / ACE-M).